The following is a 474-amino-acid chain: Variant surface glycoprotein MITAT 1.5 (474 aa).

The signal sequence occupies residues 1–22 (MIHSNKVATVVLALISSWPADG). 2 disulfide bridges follow: Cys37–Cys161 and Cys144–Cys214. N-linked (GlcNAc...) asparagine glycans are attached at residues Asn74 and Asn95. An N-linked (GlcNAc...) asparagine glycan is attached at Asn329. Positions 388–449 (AKDGEGQKNQ…ETDEPDKEKC (62 aa)) are disordered. 2 stretches are compositionally biased toward basic and acidic residues: residues 414–423 (TNKEACEKEN) and 435–449 (KGKD…KEKC). Asn451 is lipidated: GPI-anchor amidated asparagine. Residues 452 to 474 (GSFLTSKQFAFSVVSAAFMALLF) constitute a propeptide, removed in mature form.

The protein localises to the cell membrane. Functionally, VSG forms a coat on the surface of the parasite. The trypanosome evades the immune response of the host by expressing a series of antigenically distinct VSGs from an estimated 1000 VSG genes. This Trypanosoma brucei brucei protein is Variant surface glycoprotein MITAT 1.5.